The chain runs to 98 residues: Large ribosomal subunit protein uL23 (98 aa).

It belongs to the universal ribosomal protein uL23 family. As to quaternary structure, part of the 50S ribosomal subunit. Contacts protein L29, and trigger factor when it is bound to the ribosome.

Functionally, one of the early assembly proteins it binds 23S rRNA. One of the proteins that surrounds the polypeptide exit tunnel on the outside of the ribosome. Forms the main docking site for trigger factor binding to the ribosome. This chain is Large ribosomal subunit protein uL23, found in Limosilactobacillus reuteri (strain DSM 20016) (Lactobacillus reuteri).